Consider the following 178-residue polypeptide: MSRIGNKVIVLPAGVELANNDNVVTVKGPKGELTREFSKDIEIRVEGTEVTLHRPNDSKEMKTIHGTTRALLNNMVVGVSEGFKKELEMRGVGYRAQLQGSKLVLAVGKSHPDEVEAPEGITFELPNPTTIVVSGISKEVVGQTAAYVRSLRSPEPYKGKGIRYVGEFVRRKEGKTGK.

It belongs to the universal ribosomal protein uL6 family. As to quaternary structure, part of the 50S ribosomal subunit.

Functionally, this protein binds to the 23S rRNA, and is important in its secondary structure. It is located near the subunit interface in the base of the L7/L12 stalk, and near the tRNA binding site of the peptidyltransferase center. In Streptococcus pneumoniae (strain JJA), this protein is Large ribosomal subunit protein uL6.